The chain runs to 647 residues: DNA polymerase subunit gamma-1 (647 aa).

The tract at residues 116 to 147 (ERPGRAEQSQMQDEDGLPELVEESSQPSFHHG) is disordered. Residues 127-137 (QDEDGLPELVE) show a composition bias toward acidic residues.

Belongs to the DNA polymerase type-A family. Heterotrimer composed of a catalytic subunit and a homodimer of accessory subunits. Interacts with TTC3. The cofactor is Mg(2+).

The protein localises to the mitochondrion. The protein resides in the mitochondrion matrix. It is found in the mitochondrion nucleoid. It catalyses the reaction DNA(n) + a 2'-deoxyribonucleoside 5'-triphosphate = DNA(n+1) + diphosphate. Its function is as follows. Involved in the replication of mitochondrial DNA. Associates with mitochondrial DNA. The protein is DNA polymerase subunit gamma-1 (POLG) of Gallus gallus (Chicken).